A 158-amino-acid chain; its full sequence is Large ribosomal subunit protein uL23 (158 aa).

Positions 1–43 (MPPKSSTKAEPKASSAKTQVAKAKSAKKAVVKGTSSKTQRRIR) are disordered. Over residues 12–23 (KASSAKTQVAKA) the composition is skewed to low complexity.

This sequence belongs to the universal ribosomal protein uL23 family.

Its function is as follows. This protein binds to a specific region on the 26S rRNA. This Puccinia graminis (Black stem rust fungus) protein is Large ribosomal subunit protein uL23.